We begin with the raw amino-acid sequence, 30 residues long: Alpha-conotoxin EIVA (30 aa).

3 cysteine pairs are disulfide-bonded: cysteine 2/cysteine 16, cysteine 3/cysteine 11, and cysteine 14/cysteine 24. 5 positions are modified to 4-hydroxyproline: proline 7, proline 13, proline 21, proline 22, and proline 27. Glycine 30 carries the post-translational modification Glycine amide.

Expressed by the venom duct.

It is found in the secreted. Alpha-conotoxins act on postsynaptic membranes, they bind to the nicotinic acetylcholine receptors (nAChR) and thus inhibit them. This toxin binds with high affinity to both fetal (alpha-1-beta-1-epsilon-delta (CHRNA1-CHRNB1-CHRND-CHRNE) subunits) and adult (alpha-1/beta-1/gamma/delta subunits) mammalian muscle nicotinic acetylcholine receptors (nAChR). The chain is Alpha-conotoxin EIVA from Conus ermineus (Agate cone).